Consider the following 107-residue polypeptide: Large ribosomal subunit protein uL24 (107 aa).

The protein belongs to the universal ribosomal protein uL24 family. Part of the 50S ribosomal subunit.

Functionally, one of two assembly initiator proteins, it binds directly to the 5'-end of the 23S rRNA, where it nucleates assembly of the 50S subunit. One of the proteins that surrounds the polypeptide exit tunnel on the outside of the subunit. In Neisseria meningitidis serogroup C (strain 053442), this protein is Large ribosomal subunit protein uL24.